A 146-amino-acid polypeptide reads, in one-letter code: uncharacterized protein (146 aa).

This is an uncharacterized protein from Escherichia coli O157:H7.